The chain runs to 235 residues: Orotidine 5'-phosphate decarboxylase (235 aa).

Substrate-binding positions include aspartate 12, lysine 34, aspartate 61–threonine 70, threonine 121, arginine 182, glutamine 191, glycine 211, and arginine 212. Lysine 63 functions as the Proton donor in the catalytic mechanism.

Belongs to the OMP decarboxylase family. Type 1 subfamily. Homodimer.

It catalyses the reaction orotidine 5'-phosphate + H(+) = UMP + CO2. It participates in pyrimidine metabolism; UMP biosynthesis via de novo pathway; UMP from orotate: step 2/2. In terms of biological role, catalyzes the decarboxylation of orotidine 5'-monophosphate (OMP) to uridine 5'-monophosphate (UMP). In Marinomonas sp. (strain MWYL1), this protein is Orotidine 5'-phosphate decarboxylase.